We begin with the raw amino-acid sequence, 546 residues long: Cholesterol oxidase (546 aa).

The segment at residues 1–42 (MTAQQHLSRRRMLGMAAFGAAALAGGTTIAAPRAAAAAKSAA) is a signal peptide (tat-type signal). FAD-binding residues include Tyr-57, Gly-58, Glu-77, Gly-152, Asn-156, Gly-157, Met-159, and Val-287. Active-site proton acceptor residues include Glu-398 and His-484. FAD-binding residues include Gly-512 and Phe-524.

It belongs to the GMC oxidoreductase family. In terms of assembly, monomer. The cofactor is FAD. Post-translationally, predicted to be exported by the Tat system. The position of the signal peptide cleavage has been experimentally proven.

It is found in the secreted. The catalysed reaction is cholesterol + O2 = cholest-5-en-3-one + H2O2. The enzyme catalyses cholest-5-en-3-one = cholest-4-en-3-one. The protein operates within steroid metabolism; cholesterol degradation. Functionally, bifunctional enzyme that catalyzes the oxidation and isomerization of cholesterol to cholestenone (cholest-4-en-3-one), an initial step in the cholesterol degradation process. The cholesterol degradation pathway allows the bacterium to utilize cholesterol as its sole source of carbon and energy. This chain is Cholesterol oxidase, found in Streptomyces sp. (strain SA-COO).